The chain runs to 274 residues: 23S rRNA (adenosine(1067)-2'-O)-methyltransferase (274 aa).

Residues Arg165, Leu195, 218–220 (GSE), 238–240 (IPM), and 247–252 (LNVSVS) each bind S-adenosyl-L-methionine.

It belongs to the class IV-like SAM-binding methyltransferase superfamily. RNA methyltransferase TsnR/AvirB family. Homodimer.

It catalyses the reaction adenosine(1067) in 23S rRNA + S-adenosyl-L-methionine = 2'-O-methyladenosine(1067) in 23S rRNA + S-adenosyl-L-homocysteine + H(+). Its function is as follows. Specifically methylates the adenosine-1067 in 23S ribosomal RNA. Confers resistance to antibiotic nosiheptide. This chain is 23S rRNA (adenosine(1067)-2'-O)-methyltransferase, found in Streptomyces actuosus.